A 488-amino-acid chain; its full sequence is Ammonium transporter 1 member 1 (488 aa).

The next 11 helical transmembrane spans lie at 47-69 (TYLL…LLAG), 90-109 (LFYY…NGFI), 129-148 (FLYQ…GSIA), 153-175 (FVAY…SHWF), 195-217 (VIDF…YGAL), 238-257 (HSAS…WYGF), 281-303 (AVGR…TLFG), 316-333 (VCNG…GCSV), 337-356 (WAAI…FNML), 368-387 (AAQL…GLFA), and 418-440 (HIIQ…FYIL).

The protein belongs to the ammonia transporter channel (TC 1.A.11.2) family. As to expression, root hairs and leaves.

The protein resides in the membrane. Ammonium transporter that may be involved in ammonium uptake from the soil. The chain is Ammonium transporter 1 member 1 (AMT1-1) from Solanum lycopersicum (Tomato).